The chain runs to 562 residues: Ribonuclease Y (562 aa).

Residues 1 to 21 (MNMLYFVLALLVGLAGGFFVG) form a helical membrane-spanning segment. The segment at 108 to 129 (AAQDAARERETLSADRQETRRE) is disordered. Residues 252 to 312 (SVSVVPIPND…VRREVARHVL (61 aa)) form the KH domain. Positions 378–471 (VLKHSVQVAH…VAAADAISAA (94 aa)) constitute an HD domain.

Belongs to the RNase Y family.

The protein localises to the cell membrane. Its function is as follows. Endoribonuclease that initiates mRNA decay. The chain is Ribonuclease Y from Deinococcus geothermalis (strain DSM 11300 / CIP 105573 / AG-3a).